We begin with the raw amino-acid sequence, 106 residues long: Pyruvate decarboxylase 2 (106 aa).

Mg(2+)-binding residues include N10 and G12.

Belongs to the TPP enzyme family. Homotetramer. A metal cation serves as cofactor. Requires thiamine diphosphate as cofactor.

It catalyses the reaction a 2-oxocarboxylate + H(+) = an aldehyde + CO2. This Zea mays (Maize) protein is Pyruvate decarboxylase 2 (PDC2).